Consider the following 431-residue polypeptide: UDP-N-acetylglucosamine 1-carboxyvinyltransferase (431 aa).

22 to 23 is a binding site for phosphoenolpyruvate; it reads KN. Arg-93 is a binding site for UDP-N-acetyl-alpha-D-glucosamine. Catalysis depends on Cys-117, which acts as the Proton donor. The residue at position 117 (Cys-117) is a 2-(S-cysteinyl)pyruvic acid O-phosphothioketal. Asp-307 and Val-329 together coordinate UDP-N-acetyl-alpha-D-glucosamine.

This sequence belongs to the EPSP synthase family. MurA subfamily.

It is found in the cytoplasm. The enzyme catalyses phosphoenolpyruvate + UDP-N-acetyl-alpha-D-glucosamine = UDP-N-acetyl-3-O-(1-carboxyvinyl)-alpha-D-glucosamine + phosphate. Its pathway is cell wall biogenesis; peptidoglycan biosynthesis. Cell wall formation. Adds enolpyruvyl to UDP-N-acetylglucosamine. This chain is UDP-N-acetylglucosamine 1-carboxyvinyltransferase, found in Nitrosococcus oceani (strain ATCC 19707 / BCRC 17464 / JCM 30415 / NCIMB 11848 / C-107).